The primary structure comprises 189 residues: GTPase HRas (189 aa).

Met-1 bears the N-acetylmethionine mark. Position 2 is an N-acetylthreonine; in GTPase HRas, N-terminally processed (Thr-2). 10–17 contributes to the GTP binding site; the sequence is GAGGVGKS. The Effector region motif lies at 32–40; sequence YDPTIEDSY. GTP-binding positions include 57–61 and 116–119; these read DTAGQ and NKCD. Cys-118 carries the S-nitrosocysteine modification. Residues 166-185 are hypervariable region; sequence HKLRKLNPPDESGPGCMNCK. 2 S-palmitoyl cysteine lipidation sites follow: Cys-181 and Cys-184. Cys-186 is modified (cysteine methyl ester). Cys-186 carries S-farnesyl cysteine lipidation. The propeptide at 187-189 is removed in mature form; that stretch reads VIS.

It belongs to the small GTPase superfamily. Ras family. In terms of processing, palmitoylated by the ZDHHC9-GOLGA7 complex. A continuous cycle of de- and re-palmitoylation regulates rapid exchange between plasma membrane and Golgi.

The protein resides in the cell membrane. The protein localises to the golgi apparatus membrane. It carries out the reaction GTP + H2O = GDP + phosphate + H(+). Alternates between an inactive form bound to GDP and an active form bound to GTP. Activated by a guanine nucleotide-exchange factor (GEF) and inactivated by a GTPase-activating protein (GAP). In terms of biological role, ras proteins bind GDP/GTP and possess intrinsic GTPase activity. The protein is GTPase HRas (HRAS) of Gallus gallus (Chicken).